The following is a 216-amino-acid chain: Endoplasmic reticulum vesicle protein 25 (216 aa).

The N-terminal stretch at 1 to 25 (MGSSRLAMRSALGLFFLLFVQISLA) is a signal peptide. Residues 26–185 (LKFDIAAGKG…TNESTNERVK (160 aa)) are Lumenal-facing. A GOLD domain is found at 36-126 (ERCIRNFVLK…HRSIELDVDI (91 aa)). Residues 186-206 (WFAFGTMGMLVGLGVWQVIYL) form a helical membrane-spanning segment. Over 207–216 (RAYFRSKHLI) the chain is Cytoplasmic.

This sequence belongs to the EMP24/GP25L family.

It is found in the endoplasmic reticulum membrane. The protein localises to the golgi apparatus membrane. Its function is as follows. Constituent of COPII-coated endoplasmic reticulum-derived transport vesicles. Required for efficient transport of a subset of secretory proteins to the Golgi. Facilitates retrograde transport from the Golgi to the endoplasmic reticulum. The chain is Endoplasmic reticulum vesicle protein 25 (erv25) from Emericella nidulans (strain FGSC A4 / ATCC 38163 / CBS 112.46 / NRRL 194 / M139) (Aspergillus nidulans).